A 406-amino-acid polypeptide reads, in one-letter code: Type II secretion system protein F (406 aa).

Residues 1-171 lie on the Cytoplasmic side of the membrane; it reads MAAFEYKALD…KMRSKLQQAM (171 aa). Ca(2+) contacts are provided by E97, E151, and D155. A helical transmembrane segment spans residues 172–192; the sequence is IYPVVLVVFAVGIVAFLLAAV. Over 193 to 223 the chain is Periplasmic; sequence VPKIVGQFVQMGQALPASTQFLLDASDFLQH. Residues 224–244 form a helical membrane-spanning segment; the sequence is WGISLLVGLLMLIYLVRWLLT. At 245–368 the chain is on the cytoplasmic side; it reads KPDIRLRWDR…QDNSFESTVN (124 aa). The helical transmembrane segment at 369 to 389 threads the bilayer; that stretch reads IALGIFTPALIALMAGMVLFI. Topologically, residues 390–406 are periplasmic; that stretch reads VMATLMPILEMNNLMSR.

The protein belongs to the GSP F family. As to quaternary structure, type II secretion system is composed of four main components: the outer membrane complex, the inner membrane complex, the cytoplasmic secretion ATPase and the periplasm-spanning pseudopilus. Homodimer. Interacts with EpsE/GspE and EpsL/GspL components.

It is found in the cell inner membrane. In terms of biological role, component of the type II secretion system inner membrane complex required for the energy-dependent secretion of extracellular factors such as proteases and toxins from the periplasm. This chain is Type II secretion system protein F (epsF), found in Vibrio cholerae serotype O1 (strain ATCC 39315 / El Tor Inaba N16961).